Reading from the N-terminus, the 158-residue chain is Transcription elongation factor GreA (158 aa).

It belongs to the GreA/GreB family.

In terms of biological role, necessary for efficient RNA polymerase transcription elongation past template-encoded arresting sites. The arresting sites in DNA have the property of trapping a certain fraction of elongating RNA polymerases that pass through, resulting in locked ternary complexes. Cleavage of the nascent transcript by cleavage factors such as GreA or GreB allows the resumption of elongation from the new 3'terminus. GreA releases sequences of 2 to 3 nucleotides. The chain is Transcription elongation factor GreA from Ruthia magnifica subsp. Calyptogena magnifica.